A 78-amino-acid polypeptide reads, in one-letter code: D-alanyl carrier protein (78 aa).

The 78-residue stretch at 1–78 folds into the Carrier domain; that stretch reads MEFREQVLDL…KIVEVLEELR (78 aa). The residue at position 36 (serine 36) is an O-(pantetheine 4'-phosphoryl)serine.

It belongs to the DltC family. In terms of processing, 4'-phosphopantetheine is transferred from CoA to a specific serine of apo-DCP.

Its subcellular location is the cytoplasm. It functions in the pathway cell wall biogenesis; lipoteichoic acid biosynthesis. Carrier protein involved in the D-alanylation of lipoteichoic acid (LTA). The loading of thioester-linked D-alanine onto DltC is catalyzed by D-alanine--D-alanyl carrier protein ligase DltA. The DltC-carried D-alanyl group is further transferred to cell membrane phosphatidylglycerol (PG) by forming an ester bond, probably catalyzed by DltD. D-alanylation of LTA plays an important role in modulating the properties of the cell wall in Gram-positive bacteria, influencing the net charge of the cell wall. The sequence is that of D-alanyl carrier protein from Staphylococcus xylosus.